The primary structure comprises 347 residues: NADH-ubiquinone oxidoreductase chain 2 (347 aa).

Transmembrane regions (helical) follow at residues 3-23 (PPIL…VLTS), 25-45 (HWLL…PILM), 60-80 (FLTQ…NLMF), 96-116 (GLVT…FWVP), 122-142 (ISLS…LSIL), 153-173 (LLIT…LNQT), 178-198 (ILAY…TYNP), 200-220 (LMIL…MLFM), 237-257 (LPLM…LPPL), 274-294 (DMII…YFYM), and 323-343 (IILL…TPMM).

The protein belongs to the complex I subunit 2 family. As to quaternary structure, core subunit of respiratory chain NADH dehydrogenase (Complex I) which is composed of 45 different subunits. Interacts with TMEM242.

It localises to the mitochondrion inner membrane. It carries out the reaction a ubiquinone + NADH + 5 H(+)(in) = a ubiquinol + NAD(+) + 4 H(+)(out). Functionally, core subunit of the mitochondrial membrane respiratory chain NADH dehydrogenase (Complex I) which catalyzes electron transfer from NADH through the respiratory chain, using ubiquinone as an electron acceptor. Essential for the catalytic activity and assembly of complex I. In Halichoerus grypus (Gray seal), this protein is NADH-ubiquinone oxidoreductase chain 2.